Here is a 332-residue protein sequence, read N- to C-terminus: DNA-directed RNA polymerase subunit alpha (332 aa).

The segment at 1 to 234 (MTVTISQVLR…DQLSVFGDFT (234 aa)) is alpha N-terminal domain (alpha-NTD). The segment at 248 to 332 (VDPVLLRPID…PGVSQYGMLG (85 aa)) is alpha C-terminal domain (alpha-CTD).

Belongs to the RNA polymerase alpha chain family. Homodimer. The RNAP catalytic core consists of 2 alpha, 1 beta, 1 beta' and 1 omega subunit. When a sigma factor is associated with the core the holoenzyme is formed, which can initiate transcription.

The enzyme catalyses RNA(n) + a ribonucleoside 5'-triphosphate = RNA(n+1) + diphosphate. Its function is as follows. DNA-dependent RNA polymerase catalyzes the transcription of DNA into RNA using the four ribonucleoside triphosphates as substrates. This Xylella fastidiosa (strain M12) protein is DNA-directed RNA polymerase subunit alpha.